Here is a 160-residue protein sequence, read N- to C-terminus: SsrA-binding protein (160 aa).

This sequence belongs to the SmpB family.

It localises to the cytoplasm. In terms of biological role, required for rescue of stalled ribosomes mediated by trans-translation. Binds to transfer-messenger RNA (tmRNA), required for stable association of tmRNA with ribosomes. tmRNA and SmpB together mimic tRNA shape, replacing the anticodon stem-loop with SmpB. tmRNA is encoded by the ssrA gene; the 2 termini fold to resemble tRNA(Ala) and it encodes a 'tag peptide', a short internal open reading frame. During trans-translation Ala-aminoacylated tmRNA acts like a tRNA, entering the A-site of stalled ribosomes, displacing the stalled mRNA. The ribosome then switches to translate the ORF on the tmRNA; the nascent peptide is terminated with the 'tag peptide' encoded by the tmRNA and targeted for degradation. The ribosome is freed to recommence translation, which seems to be the essential function of trans-translation. The polypeptide is SsrA-binding protein (Zymomonas mobilis subsp. mobilis (strain ATCC 31821 / ZM4 / CP4)).